We begin with the raw amino-acid sequence, 276 residues long: Mitochondrial distribution and morphology protein 12 (276 aa).

In terms of domain architecture, SMP-LTD spans methionine 1 to tyrosine 276. Residues threonine 68 to lysine 104 form a disordered region. Positions serine 75–methionine 89 are enriched in acidic residues.

The protein belongs to the MDM12 family. In terms of assembly, component of the ER-mitochondria encounter structure (ERMES) or MDM complex, composed of mmm1, mdm10, mdm12 and mdm34. A mmm1 homodimer associates with one molecule of mdm12 on each side in a pairwise head-to-tail manner, and the SMP-LTD domains of mmm1 and mdm12 generate a continuous hydrophobic tunnel for phospholipid trafficking.

The protein resides in the mitochondrion outer membrane. It is found in the endoplasmic reticulum membrane. Component of the ERMES/MDM complex, which serves as a molecular tether to connect the endoplasmic reticulum (ER) and mitochondria. Components of this complex are involved in the control of mitochondrial shape and protein biogenesis, and function in nonvesicular lipid trafficking between the ER and mitochondria. Mdm12 is required for the interaction of the ER-resident membrane protein mmm1 and the outer mitochondrial membrane-resident beta-barrel protein mdm10. The mdm12-mmm1 subcomplex functions in the major beta-barrel assembly pathway that is responsible for biogenesis of all mitochondrial outer membrane beta-barrel proteins, and acts in a late step after the SAM complex. The mdm10-mdm12-mmm1 subcomplex further acts in the TOM40-specific pathway after the action of the mdm12-mmm1 complex. Essential for establishing and maintaining the structure of mitochondria and maintenance of mtDNA nucleoids. This chain is Mitochondrial distribution and morphology protein 12, found in Schizosaccharomyces japonicus (strain yFS275 / FY16936) (Fission yeast).